The primary structure comprises 430 residues: Adenylosuccinate synthetase (430 aa).

GTP-binding positions include 12-18 (GDEGKGK) and 40-42 (GHT). Aspartate 13 acts as the Proton acceptor in catalysis. Mg(2+) is bound by residues aspartate 13 and glycine 40. IMP-binding positions include 13–16 (DEGK), 38–41 (NAGH), threonine 130, arginine 144, glutamine 224, threonine 239, and arginine 303. The active-site Proton donor is histidine 41. 299 to 305 (VVTGRKR) is a substrate binding site. Residues arginine 305, 331–333 (KLD), and 413–415 (STS) each bind GTP.

Belongs to the adenylosuccinate synthetase family. As to quaternary structure, homodimer. The cofactor is Mg(2+).

The protein resides in the cytoplasm. It carries out the reaction IMP + L-aspartate + GTP = N(6)-(1,2-dicarboxyethyl)-AMP + GDP + phosphate + 2 H(+). Its pathway is purine metabolism; AMP biosynthesis via de novo pathway; AMP from IMP: step 1/2. In terms of biological role, plays an important role in the de novo pathway of purine nucleotide biosynthesis. Catalyzes the first committed step in the biosynthesis of AMP from IMP. The polypeptide is Adenylosuccinate synthetase (Methylobacterium sp. (strain 4-46)).